The primary structure comprises 90 residues: UPF0298 protein SSU98_1559 (90 aa).

It belongs to the UPF0298 family.

The protein resides in the cytoplasm. The protein is UPF0298 protein SSU98_1559 of Streptococcus suis (strain 98HAH33).